The chain runs to 207 residues: Large ribosomal subunit protein uL4 (207 aa).

Over residues 44-58 (RAPTRATRERSDVAR) the composition is skewed to basic and acidic residues. Residues 44–82 (RAPTRATRERSDVARSGKKFGRQKGGGTARHGDRRSPIF) are disordered.

It belongs to the universal ribosomal protein uL4 family. As to quaternary structure, part of the 50S ribosomal subunit.

In terms of biological role, one of the primary rRNA binding proteins, this protein initially binds near the 5'-end of the 23S rRNA. It is important during the early stages of 50S assembly. It makes multiple contacts with different domains of the 23S rRNA in the assembled 50S subunit and ribosome. Its function is as follows. Forms part of the polypeptide exit tunnel. This Zymomonas mobilis subsp. mobilis (strain ATCC 31821 / ZM4 / CP4) protein is Large ribosomal subunit protein uL4.